We begin with the raw amino-acid sequence, 524 residues long: Origin of replication complex subunit 5 (524 aa).

Over residues 1–19 the composition is skewed to low complexity; sequence MSQPVTPRRTTRSSASASP. Positions 1–56 are disordered; that stretch reads MSQPVTPRRTTRSSASASPSPAPASPTSPPKSRPKPSPRRQLLAAAAAPPKEDGSS. Pro residues predominate over residues 20–31; it reads SPAPASPTSPPK. The span at 39 to 49 shows a compositional bias: low complexity; the sequence is RRQLLAAAAAP. 90-97 provides a ligand contact to ATP; sequence GGAATGKT.

Belongs to the ORC5 family. Component of the origin recognition complex (ORC) composed of at least ORC1, ORC2, ORC3, ORC4, ORC5 and ORC6. ORC is regulated in a cell-cycle and development dependent manner. It is sequentially assembled at the exit from anaphase of mitosis and disassembled as cells enter S phase.

Its subcellular location is the nucleus. Component of the origin recognition complex (ORC) that binds origins of replication. DNA-binding is ATP-dependent. The specific DNA sequences that define origins of replication have not been identified yet. ORC is required to assemble the pre-replication complex necessary to initiate DNA replication. This chain is Origin of replication complex subunit 5, found in Oryza sativa subsp. indica (Rice).